A 37-amino-acid polypeptide reads, in one-letter code: Photosystem II reaction center protein T (37 aa).

A helical membrane pass occupies residues 3–23 (ALVYTFLLVGTLGIIFFAIFF).

It belongs to the PsbT family. As to quaternary structure, PSII is composed of 1 copy each of membrane proteins PsbA, PsbB, PsbC, PsbD, PsbE, PsbF, PsbH, PsbI, PsbJ, PsbK, PsbL, PsbM, PsbT, PsbY, PsbZ, Psb30/Ycf12, at least 3 peripheral proteins of the oxygen-evolving complex and a large number of cofactors. It forms dimeric complexes.

It localises to the plastid. It is found in the chloroplast thylakoid membrane. Found at the monomer-monomer interface of the photosystem II (PS II) dimer, plays a role in assembly and dimerization of PSII. PSII is a light-driven water plastoquinone oxidoreductase, using light energy to abstract electrons from H(2)O, generating a proton gradient subsequently used for ATP formation. The polypeptide is Photosystem II reaction center protein T (Spirogyra maxima (Green alga)).